A 416-amino-acid polypeptide reads, in one-letter code: Glutamyl-tRNA reductase (416 aa).

Substrate contacts are provided by residues 49–52 (TCNR), serine 105, 110–112 (EPQ), and glutamine 116. The active-site Nucleophile is the cysteine 50. 185-190 (GAGETI) serves as a coordination point for NADP(+).

This sequence belongs to the glutamyl-tRNA reductase family. As to quaternary structure, homodimer.

The catalysed reaction is (S)-4-amino-5-oxopentanoate + tRNA(Glu) + NADP(+) = L-glutamyl-tRNA(Glu) + NADPH + H(+). It participates in porphyrin-containing compound metabolism; protoporphyrin-IX biosynthesis; 5-aminolevulinate from L-glutamyl-tRNA(Glu): step 1/2. Its function is as follows. Catalyzes the NADPH-dependent reduction of glutamyl-tRNA(Glu) to glutamate 1-semialdehyde (GSA). This chain is Glutamyl-tRNA reductase, found in Shewanella frigidimarina (strain NCIMB 400).